The primary structure comprises 407 residues: MSESAFSNRIVQSLLDTDFYKLTMMQAVLHNYPNVDVEWEFRCRNGEDLRPYLDEIRHQIELLCELSLSPEHLAFLERITFIKPDFLRFLGLFRFNTRYVKTSIENDELCIRLHGPWLHVILFEVPLLAIVSEVRNRHRYPDTLLSQARDRLYDKFEWLTTHATADELAELKVADFGTRRRFSYRVQEEMLGVLKNDFPGQFVGTSNVHLARQLDLKPLGTMAHEWIMAHQQLGPRLIDSQIAALDCWVREYRGLLGIALTDCITTDAFLNDFDLYFAKLFDGLRHDSGDPVKWAEKCISHYQKLGIDPMSKTLVFSDGLNLPKALDIFRALRGRINVSFGIGTNLTADIPGIAPMNMVLKMTACAGQAVAKISDEPGKTQCKDPNFVAYLRHVFKVPDLPSPEKPA.

A Phosphohistidine; by autocatalysis modification is found at H224.

It belongs to the NAPRTase family. Post-translationally, transiently phosphorylated on a His residue during the reaction cycle. Phosphorylation strongly increases the affinity for substrates and increases the rate of nicotinate D-ribonucleotide production. Dephosphorylation regenerates the low-affinity form of the enzyme, leading to product release.

It carries out the reaction nicotinate + 5-phospho-alpha-D-ribose 1-diphosphate + ATP + H2O = nicotinate beta-D-ribonucleotide + ADP + phosphate + diphosphate. Its pathway is cofactor biosynthesis; NAD(+) biosynthesis; nicotinate D-ribonucleotide from nicotinate: step 1/1. Functionally, catalyzes the synthesis of beta-nicotinate D-ribonucleotide from nicotinate and 5-phospho-D-ribose 1-phosphate at the expense of ATP. The sequence is that of Nicotinate phosphoribosyltransferase from Pseudomonas savastanoi pv. phaseolicola (strain 1448A / Race 6) (Pseudomonas syringae pv. phaseolicola (strain 1448A / Race 6)).